A 246-amino-acid polypeptide reads, in one-letter code: Transcriptional regulatory protein LytR (246 aa).

One can recognise a Response regulatory domain in the interval 2–116 (KALIIDDEPL…RIEQAVNKVR (115 aa)). Position 53 is a 4-aspartylphosphate (Asp-53). In terms of domain architecture, HTH LytTR-type spans 141-245 (LPVEIDDKIH…MKDFKASIGL (105 aa)).

As to quaternary structure, homodimer; when phosphorylated. In terms of processing, phosphorylated and dephosphorylated by LytS.

It localises to the cytoplasm. Member of the two-component regulatory system LytR/LytS that regulates genes involved in autolysis, programmed cell death, biofilm formation and cell wall metabolism. Also participates in sensing and responding to host defense cationic antimicrobial peptides (HDPs). Upon phosphorylation by LytS, functions as a transcription regulator by direct binding to promoter regions of target genes including lrgA and lrgB, to positively regulate their expression. In Staphylococcus aureus (strain USA300), this protein is Transcriptional regulatory protein LytR (lytR).